The primary structure comprises 263 residues: Protein M1627_2099 (263 aa).

It belongs to the CinA family.

The chain is Protein M1627_2099 from Saccharolobus islandicus (strain M.16.27) (Sulfolobus islandicus).